A 339-amino-acid chain; its full sequence is Geranylgeranyl transferase type-2 subunit beta (339 aa).

Residue Thr11 is modified to Phosphothreonine. PFTB repeat units lie at residues 28 to 69 (LEKH…DLMG), 76 to 117 (REEI…TLYD), 124 to 165 (VDKV…ALLG), 172 to 213 (VEKA…AITS), 220 to 261 (SDLL…KIIG), and 268 to 310 (REKL…SLLG). Geranylgeranyl diphosphate-binding positions include 198–200 (HAG) and 240–243 (RPEK). Positions 246 and 248 each coordinate Zn(2+). Residues Tyr249 and 249–252 (YSWW) each bind geranylgeranyl diphosphate. His298 serves as a coordination point for Zn(2+).

It belongs to the protein prenyltransferase subunit beta family. In terms of assembly, heterotrimer composed of RABGGTA, RABGGTB and CHM; within this trimer, RABGGTA and RABGGTB form the catalytic component B, while CHM (component A) mediates peptide substrate binding. The Rab GGTase dimer (RGGT) interacts with CHM (component A) prior to Rab protein binding; the association is stabilized by geranylgeranyl pyrophosphate (GGpp). The CHM:RGGT:Rab complex is destabilized by GGpp. Interaction of RABGGTB with prenylated PTP4A2 precludes its association with RABGGTA and inhibits enzyme activity. Interacts with CHODL. Interacts with non-phosphorylated form of RAB8A; phosphorylation of RAB8A at 'Thr-72' disrupts this interaction. It depends on Zn(2+) as a cofactor. As to expression, ubiquitous. Detected in all the major organs in adult animals.

The enzyme catalyses geranylgeranyl diphosphate + L-cysteinyl-[protein] = S-geranylgeranyl-L-cysteinyl-[protein] + diphosphate. The enzymatic reaction requires the aid of a Rab escort protein (also called component A), such as CHM. Its function is as follows. Catalyzes the transfer of a geranylgeranyl moiety from geranylgeranyl diphosphate to both cysteines of Rab proteins with the C-terminal sequence -XXCC, -XCXC and -CCXX, such as RAB1A, RAB3A, RAB5A and RAB7A. In Mus musculus (Mouse), this protein is Geranylgeranyl transferase type-2 subunit beta (Rabggtb).